Reading from the N-terminus, the 307-residue chain is Mitochondrial thiamine pyrophosphate carrier 1 (307 aa).

Solcar repeat units lie at residues 13-95, 105-190, and 203-305; these read VSTT…IGSF, SPQL…IKIF, and PFTL…FMNK. A run of 6 helical transmembrane segments spans residues 19 to 36, 76 to 96, 108 to 126, 160 to 184, 210 to 226, and 280 to 297; these read LVAG…IAPL, IMYI…GSFL, LYSC…LASY, MGFF…FGVY, LAGP…TFPL, and GVTM…ISLW.

It belongs to the mitochondrial carrier (TC 2.A.29) family.

Its subcellular location is the mitochondrion inner membrane. Functionally, mitochondrial transporter that mediates uptake of thiamine pyrophosphate (ThPP) into mitochondria. The sequence is that of Mitochondrial thiamine pyrophosphate carrier 1 (TPC1) from Candida glabrata (strain ATCC 2001 / BCRC 20586 / JCM 3761 / NBRC 0622 / NRRL Y-65 / CBS 138) (Yeast).